The chain runs to 379 residues: Heterogeneous nuclear ribonucleoprotein A3 (379 aa).

Met-1 carries the N-acetylmethionine modification. The span at 1 to 10 (MEVKPPPGRP) shows a compositional bias: pro residues. The disordered stretch occupies residues 1 to 34 (MEVKPPPGRPQPDSGRRRRRRGEEGHDPKEPEQL). Lys-4 is covalently cross-linked (Glycyl lysine isopeptide (Lys-Gly) (interchain with G-Cter in SUMO2)). A Phosphoserine modification is found at Ser-14. Over residues 21–34 (RGEEGHDPKEPEQL) the composition is skewed to basic and acidic residues. Residues 35–118 (RKLFIGGLSF…RAVSREDSVK (84 aa)) enclose the RRM 1 domain. Residue Lys-36 forms a Glycyl lysine isopeptide (Lys-Gly) (interchain with G-Cter in SUMO2) linkage. A Phosphoserine modification is found at Ser-43. Arg-52 is modified (dimethylated arginine; alternate). Arg-52 is modified (omega-N-methylarginine; alternate). Arg-76 carries the post-translational modification Omega-N-methylarginine. A phosphoserine mark is found at Ser-112 and Ser-116. Residue Lys-118 forms a Glycyl lysine isopeptide (Lys-Gly) (interchain with G-Cter in SUMO2) linkage. Residue Thr-124 is modified to Phosphothreonine. The 80-residue stretch at 126–205 (KKIFVGGIKE…CEVKKALSKQ (80 aa)) folds into the RRM 2 domain. An N6-acetyllysine; alternate modification is found at Lys-134. Residue Lys-134 forms a Glycyl lysine isopeptide (Lys-Gly) (interchain with G-Cter in SUMO2); alternate linkage. Glycyl lysine isopeptide (Lys-Gly) (interchain with G-Cter in SUMO2) cross-links involve residues Lys-151 and Lys-182. The segment at 204-225 (KQEMQSAGSQRGRGGGSGNFMG) is disordered. Omega-N-methylarginine; alternate is present on residues Arg-214, Arg-216, Arg-226, Arg-239, and Arg-246. Asymmetric dimethylarginine; alternate is present on residues Arg-214, Arg-216, Arg-226, Arg-239, and Arg-246. Over residues 214 to 225 (RGRGGGSGNFMG) the composition is skewed to gly residues. Omega-N-methylarginine is present on Arg-257. Position 286 is an asymmetric dimethylarginine (Arg-286). Positions 335–379 (NYSGQQQSNYGPMKGGSFGGRSSGSPYGGGYGSGGGSGGYGSRRF) are disordered. A compositionally biased stretch (gly residues) spans 347-379 (MKGGSFGGRSSGSPYGGGYGSGGGSGGYGSRRF). Ser-351 is modified (phosphoserine). The residue at position 355 (Arg-355) is an Omega-N-methylarginine. Position 359 is a phosphoserine (Ser-359). A phosphotyrosine mark is found at Tyr-361 and Tyr-365. Ser-367 and Ser-371 each carry phosphoserine. Residue Tyr-374 is modified to Phosphotyrosine. At Ser-376 the chain carries Phosphoserine.

As to quaternary structure, identified in the spliceosome C complex.

The protein resides in the nucleus. Functionally, plays a role in cytoplasmic trafficking of RNA. Binds to the cis-acting response element, A2RE. May be involved in pre-mRNA splicing. The sequence is that of Heterogeneous nuclear ribonucleoprotein A3 (Hnrnpa3) from Mus musculus (Mouse).